The following is a 377-amino-acid chain: Chaperone protein DnaJ (377 aa).

A J domain is found at 8–73 (CYYETLEVER…DKRAAYDRFG (66 aa)). The segment at 135–213 (GKTAQIEIPV…CSGQGRVTRE (79 aa)) adopts a CR-type zinc-finger fold. Cys-148, Cys-151, Cys-165, Cys-168, Cys-187, Cys-190, Cys-201, and Cys-204 together coordinate Zn(2+). CXXCXGXG motif repeat units lie at residues 148–155 (CEACSGIG), 165–172 (CSTCGGAG), 187–194 (CPGCQGRG), and 201–208 (CPSCSGQG).

Belongs to the DnaJ family. Homodimer. Zn(2+) is required as a cofactor.

It is found in the cytoplasm. Functionally, participates actively in the response to hyperosmotic and heat shock by preventing the aggregation of stress-denatured proteins and by disaggregating proteins, also in an autonomous, DnaK-independent fashion. Unfolded proteins bind initially to DnaJ; upon interaction with the DnaJ-bound protein, DnaK hydrolyzes its bound ATP, resulting in the formation of a stable complex. GrpE releases ADP from DnaK; ATP binding to DnaK triggers the release of the substrate protein, thus completing the reaction cycle. Several rounds of ATP-dependent interactions between DnaJ, DnaK and GrpE are required for fully efficient folding. Also involved, together with DnaK and GrpE, in the DNA replication of plasmids through activation of initiation proteins. The sequence is that of Chaperone protein DnaJ from Bradyrhizobium diazoefficiens (strain JCM 10833 / BCRC 13528 / IAM 13628 / NBRC 14792 / USDA 110).